Consider the following 975-residue polypeptide: Translation initiation factor IF-2 (975 aa).

Basic and acidic residues-rich tracts occupy residues Asp48–Lys63 and Ala120–Ala177. Disordered regions lie at residues Asp48–Thr85 and Lys98–Pro390. Over residues Lys178–Gln211 the composition is skewed to low complexity. Residues Asp212 to Arg263 are compositionally biased toward basic and acidic residues. A compositionally biased stretch (low complexity) spans Lys302 to Gly330. Gly residues predominate over residues Ser359–Lys372. A tr-type G domain is found at Pro475–Lys644. Residues Gly484–Thr491 are G1. GTP is bound at residue Gly484–Thr491. The interval Gly509 to His513 is G2. A G3 region spans residues Asp530–Gly533. GTP is bound by residues Asp530–His534 and Asn584–Asp587. The interval Asn584–Asp587 is G4. A G5 region spans residues Ser620 to Lys622.

Belongs to the TRAFAC class translation factor GTPase superfamily. Classic translation factor GTPase family. IF-2 subfamily.

The protein localises to the cytoplasm. Its function is as follows. One of the essential components for the initiation of protein synthesis. Protects formylmethionyl-tRNA from spontaneous hydrolysis and promotes its binding to the 30S ribosomal subunits. Also involved in the hydrolysis of GTP during the formation of the 70S ribosomal complex. This Burkholderia pseudomallei (strain 1106a) protein is Translation initiation factor IF-2.